Reading from the N-terminus, the 477-residue chain is Solute carrier family 2, facilitated glucose transporter member 8 (477 aa).

At 1–25 (MSPEDPQETQPLLRPPEARTPRGRR) the chain is on the cytoplasmic side. The Dileucine internalization motif signature appears at 12-13 (LL). A helical transmembrane segment spans residues 26-46 (VFLASFAAALGPLSFGFALGY). Residues 47-70 (SSPAIPSLRRTAPPALRLGDNAAS) are Extracellular-facing. Residues 71–91 (WFGAVVTLGAAAGGILGGWLL) form a helical membrane-spanning segment. Topologically, residues 92 to 96 (DRAGR) are cytoplasmic. A helical membrane pass occupies residues 97–117 (KLSLLLCTVPFVTGFAVITAA). The Extracellular segment spans residues 118-127 (RDVWMLLGGR). The helical transmembrane segment at 128–148 (LLTGLACGVASLVAPVYISEI) threads the bilayer. The Cytoplasmic portion of the chain corresponds to 149 to 156 (AYPAVRGL). A helical membrane pass occupies residues 157–177 (LGSCVQLMVVTGILLAYVAGW). Residue Gln162 participates in D-glucose binding. Residues 178–182 (VLEWR) lie on the Extracellular side of the membrane. A helical transmembrane segment spans residues 183 to 203 (WLAVLGCVPPTLMLLLMCYMP). The Cytoplasmic portion of the chain corresponds to 204 to 257 (ETPRFLLTQHQYQEAMAALRFLWGSEEGWEEPPVGAEHQGFQLALLRRPGIYKP). The helical transmembrane segment at 258–278 (LIIGISLMVFQQLSGVNAIMF) threads the bilayer. D-glucose-binding positions include 268–269 (QQ) and Asn274. At 279–293 (YANSIFEEAKFKDSS) the chain is on the extracellular side. The chain crosses the membrane as a helical span at residues 294–314 (LASVTVGIIQVLFTAVAALIM). Topologically, residues 315 to 320 (DRAGRR) are cytoplasmic. The helical transmembrane segment at 321–341 (LLLALSGVIMVFSMSAFGTYF) threads the bilayer. Residues 342-367 (KLTQSLPSNSSHVGLVPIAAEPVDVQ) are Extracellular-facing. Asn350 carries an N-linked (GlcNAc...) asparagine glycan. A helical membrane pass occupies residues 368–388 (VGLAWLAVGSMCLFIAGFAVG). The Cytoplasmic segment spans residues 389 to 404 (WGPIPWLLMSEIFPLH). Trp394 is a binding site for D-glucose. A helical transmembrane segment spans residues 405–425 (VKGVATGICVLTNWFMAFLVT). The Extracellular segment spans residues 426-438 (KEFSSVMEMLRPY). The chain crosses the membrane as a helical span at residues 439 to 459 (GAFWLTAAFCALSVLFTLTVV). The Cytoplasmic portion of the chain corresponds to 460-477 (PETKGRTLEQVTAHFEGR).

The protein belongs to the major facilitator superfamily. Sugar transporter (TC 2.A.1.1) family. Glucose transporter subfamily. Interacts with AP2B1. Also able to mediate the transport of dehydroascorbate. Highest level of expression in placenta and testis. Highly expressed in adult and pubertal testis, but not prepubertal testis. Lower levels of expression in brain, liver, heart, kidney, fat and skeletal muscle.

The protein resides in the cell membrane. It localises to the cytoplasmic vesicle membrane. It carries out the reaction D-glucose(out) = D-glucose(in). The catalysed reaction is D-fructose(out) = D-fructose(in). The enzyme catalyses L-dehydroascorbate(out) = L-dehydroascorbate(in). It catalyses the reaction alpha,alpha-trehalose(in) = alpha,alpha-trehalose(out). With respect to regulation, inhibited by cytochalasin B. Insulin-regulated facilitative hexose transporter that mediates the transport of glucose and fructose. Facilitates hepatic influx of dietary trehalose, which in turn inhibits glucose and fructose influx triggering a starvation signal and hepatic autophagy through activation of AMPK and ULK1. Also able to mediate the transport of dehydroascorbate. The sequence is that of Solute carrier family 2, facilitated glucose transporter member 8 from Mus musculus (Mouse).